The chain runs to 2025 residues: E3 ubiquitin-protein ligase TRIP12 (2025 aa).

The segment covering 1-10 has biased composition (polar residues); the sequence is MSNRPNNNPG. The interval 1–404 is disordered; it reads MSNRPNNNPG…SGESESDDSE (404 aa). Ser2 carries the N-acetylserine modification. The residue at position 12 (Ser12) is a Phosphoserine. Positions 18 to 27 are enriched in polar residues; that stretch reads RNTAGAQPQD. Positions 48–70 are enriched in basic and acidic residues; sequence DPDRANTSERQKTGQVPKKDNSR. Residues Ser77, Ser85, and Ser100 each carry the phosphoserine modification. Residues 78–88 show a composition bias toward polar residues; that stretch reads PDYNRTNSPSS. The span at 119 to 132 shows a compositional bias: polar residues; it reads EQQLKSAQLPSTSK. 2 stretches are compositionally biased toward low complexity: residues 154–166 and 177–215; these read SSCV…SEST and KLAS…ASST. Position 181 is an N6-acetyllysine (Lys181). The span at 280–290 shows a compositional bias: polar residues; the sequence is PGSSKSETSKP. A phosphoserine mark is found at Ser310 and Ser312. Residues 326 to 338 are compositionally biased toward polar residues; that stretch reads QKTTGSCASTSRR. Residues 346-358 are compositionally biased toward basic and acidic residues; that stretch reads GAAEARRQEKMAD. Over residues 360-371 the composition is skewed to polar residues; the sequence is ESNQETVNSSAA. Residues 379-397 are compositionally biased toward low complexity; sequence GAAASSSVAGAVGMTTSGE. The 115-residue stretch at 755-869 folds into the WWE domain; sequence MLKKGNAQNT…DPELAKSFIK (115 aa). Residues 970–1077 are disordered; sequence ESLLTSPPKA…QSPKSSFLAS (108 aa). A Phosphoserine modification is found at Ser975. Residues 983–1006 show a composition bias toward low complexity; it reads GSGSLGSTTPASSGTATAATNASA. 2 positions are modified to phosphoserine: Ser1024 and Ser1030. Residues 1034–1047 are compositionally biased toward basic residues; it reads KRKRLPKRGPRRPK. Ser1049 is subject to Phosphoserine. Residues 1050–1059 show a composition bias toward basic and acidic residues; the sequence is PPRDDDKVDN. Residues 1062 to 1073 show a composition bias toward low complexity; it reads KSPTTTQSPKSS. Ser1063, Ser1350, Ser1355, Ser1362, and Ser1409 each carry phosphoserine. Thr1410 carries the phosphothreonine modification. Disordered stretches follow at residues 1441 to 1466 and 1601 to 1620; these read TKDC…NAKK and TNPE…PRLD. Lys1458 bears the N6-acetyllysine mark. Ser1460 carries the phosphoserine modification. A K-box region spans residues 1529 to 1603; the sequence is EIIPTSEFIN…AMQRLLDTNP (75 aa). Residues 1918-2025 form the HECT domain; sequence PDHGYTHDSR…REGQQSFHLS (108 aa). Catalysis depends on Cys1992, which acts as the Glycyl thioester intermediate.

It belongs to the UPL family. K-HECT subfamily. As to quaternary structure, interacts with MYC; leading to disrupt interaction with isoform p19ARF/ARF of CDKN2A. Interacts with TRADD; leading to disrupt interaction with isoform p19ARF/ARF of CDKN2A. Interacts with SMARCC1; leading to disrupt interaction with SMARCE1.

The protein resides in the nucleus. It is found in the nucleoplasm. The enzyme catalyses S-ubiquitinyl-[E2 ubiquitin-conjugating enzyme]-L-cysteine + [acceptor protein]-L-lysine = [E2 ubiquitin-conjugating enzyme]-L-cysteine + N(6)-ubiquitinyl-[acceptor protein]-L-lysine.. Its pathway is protein modification; protein ubiquitination. Its function is as follows. E3 ubiquitin-protein ligase involved in ubiquitin fusion degradation (UFD) pathway and regulation of DNA repair. Part of the ubiquitin fusion degradation (UFD) pathway, a process that mediates ubiquitination of protein at their N-terminus, regardless of the presence of lysine residues in target proteins. Acts as a key regulator of DNA damage response by acting as a suppressor of RNF168, an E3 ubiquitin-protein ligase that promotes accumulation of 'Lys-63'-linked histone H2A and H2AX at DNA damage sites, thereby acting as a guard against excessive spreading of ubiquitinated chromatin at damaged chromosomes. In normal cells, mediates ubiquitination and degradation of isoform p19ARF/ARF of CDKN2A, a lysine-less tumor suppressor required for p53/TP53 activation under oncogenic stress. In cancer cells, however, isoform p19ARF/ARF and TRIP12 are located in different cell compartments, preventing isoform p19ARF/ARF ubiquitination and degradation. Does not mediate ubiquitination of isoform p16-INK4a of CDKN2A. Also catalyzes ubiquitination of NAE1 and SMARCE1, leading to their degradation. Ubiquitination and degradation of target proteins is regulated by interaction with proteins such as MYC, TRADD or SMARCC1, which disrupt the interaction between TRIP12 and target proteins. Mediates ubiquitination of ASXL1: following binding to N(6)-methyladenosine methylated DNA, ASXL1 is ubiquitinated by TRIP12, leading to its degradation and subsequent inactivation of the PR-DUB complex. This is E3 ubiquitin-protein ligase TRIP12 (Trip12) from Mus musculus (Mouse).